We begin with the raw amino-acid sequence, 270 residues long: 3-phenylpropionate-dihydrodiol/cinnamic acid-dihydrodiol dehydrogenase (270 aa).

Residue 10-34 coordinates NAD(+); it reads FITGGGSGLGLALVERFIEEGAQVA. Substrate is bound at residue Ser-143. The active-site Proton acceptor is the Tyr-156.

Belongs to the short-chain dehydrogenases/reductases (SDR) family.

It carries out the reaction 3-(cis-5,6-dihydroxycyclohexa-1,3-dien-1-yl)propanoate + NAD(+) = 3-(2,3-dihydroxyphenyl)propanoate + NADH + H(+). The enzyme catalyses (2E)-3-(cis-5,6-dihydroxycyclohexa-1,3-dien-1-yl)prop-2-enoate + NAD(+) = (2E)-3-(2,3-dihydroxyphenyl)prop-2-enoate + NADH + H(+). It participates in aromatic compound metabolism; 3-phenylpropanoate degradation. Its function is as follows. Converts 3-phenylpropionate-dihydrodiol (PP-dihydrodiol) and cinnamic acid-dihydrodiol (CI-dihydrodiol) into 3-(2,3-dihydroxylphenyl)propanoic acid (DHPP) and 2,3-dihydroxicinnamic acid (DHCI), respectively. The polypeptide is 3-phenylpropionate-dihydrodiol/cinnamic acid-dihydrodiol dehydrogenase (Escherichia coli O8 (strain IAI1)).